The sequence spans 282 residues: Stage 0 sporulation protein J (282 aa).

A DNA-binding region (H-T-H motif) is located at residues 139 to 158 (EQLAKRLGKSRPHIANHLRL).

It belongs to the ParB family.

The protein resides in the cytoplasm. Its subcellular location is the nucleoid. Its function is as follows. Required for the initiation of sporulation and for normal chromosome segregation. Antagonizes sporulation inhibition by Soj. It probably interacts with a specific DNA site and other proteins involved in partitioning and cell division, and antagonizes Soj in response to cell cycle events related to chromosome partitioning. The chain is Stage 0 sporulation protein J from Bacillus subtilis (strain 168).